The sequence spans 244 residues: HTH-type transcriptional regulator Cmr (244 aa).

41 to 160 (GSAPLHRDDV…RRWLSSVAQR (120 aa)) contacts a nucleoside 3',5'-cyclic phosphate. Residues 174-237 (RPLPAQVAQL…YAVIEITDQH (64 aa)) form the HTH crp-type domain. Residues 197–216 (QRTLAAMLGAQRPSINKILK) constitute a DNA-binding region (H-T-H motif).

In terms of biological role, positively regulates the expression of at least groEL2. This Mycobacterium tuberculosis (strain CDC 1551 / Oshkosh) protein is HTH-type transcriptional regulator Cmr (cmr).